Consider the following 351-residue polypeptide: Probable cobalt-factor III C(17)-methyltransferase (351 aa).

This sequence belongs to the precorrin methyltransferase family.

It carries out the reaction Co(II)-factor III + S-adenosyl-L-methionine + H(+) = Co(II)-factor IV + S-adenosyl-L-homocysteine. It participates in cofactor biosynthesis; adenosylcobalamin biosynthesis; cob(II)yrinate a,c-diamide from sirohydrochlorin (anaerobic route): step 3/10. Its function is as follows. Methyltransferase that likely catalyzes the ring contraction and methylation of C-17 in cobalt-factor III to form cobalt-factor IV. May also convert cobalt-precorrin-3 to cobalt-precorrin-4. The sequence is that of Probable cobalt-factor III C(17)-methyltransferase (cbiH) from Methanothermobacter thermautotrophicus (strain ATCC 29096 / DSM 1053 / JCM 10044 / NBRC 100330 / Delta H) (Methanobacterium thermoautotrophicum).